We begin with the raw amino-acid sequence, 456 residues long: MQLSSSLRSARSAAASSGCALASRPVVACRRVTPSVTRPGPFTIATGPLLPASRSKAGGGIRVFSSALYEFGQQLKEDLEHDLSRARVDAITNKTRIAELEQQRRILMAVGGMADDEPELKAALMQLEEILGVSFNELQLMLAETLADHPAKMDNLAAMAAVVGTGSDGGGDESGDRRTADAADADGDGDGGERAWLRFKADVRACLADLRNRKGGITLHRAIVKDMVSASSNPGARRSSSSVDKMAREELDRLMPFLLDDFLDNMPGLKAAFTGKAEPGAEGDDGEDEEEGEAQGVGEDAVDSSSGGSGGGGVLSCTAWQQVLGRTVPASSPTLALVLARGYLAMAPRQYRALALVRMILPGKTGGGVDGALTRKEGLSLLKKLRPGISGLADKDKQWLEWVIARLAAEFAVQPAGDGHEPEPKRPELPPTAVQREPPAEEQHKPTAGARDSPNM.

The first 28 residues, 1 to 28 (MQLSSSLRSARSAAASSGCALASRPVVA), serve as a signal peptide directing secretion. 3 disordered regions span residues 167-189 (SDGG…DGDG), 273-310 (FTGK…GGSG), and 414-456 (QPAG…SPNM). The span at 281–293 (AEGDDGEDEEEGE) shows a compositional bias: acidic residues. Over residues 418–428 (DGHEPEPKRPE) the composition is skewed to basic and acidic residues.

The protein is Ezy-1 protein (Ezy-1) of Chlamydomonas reinhardtii (Chlamydomonas smithii).